Reading from the N-terminus, the 345-residue chain is Phosphoribosylformylglycinamidine cyclo-ligase (345 aa).

Belongs to the AIR synthase family.

Its subcellular location is the cytoplasm. It carries out the reaction 2-formamido-N(1)-(5-O-phospho-beta-D-ribosyl)acetamidine + ATP = 5-amino-1-(5-phospho-beta-D-ribosyl)imidazole + ADP + phosphate + H(+). The protein operates within purine metabolism; IMP biosynthesis via de novo pathway; 5-amino-1-(5-phospho-D-ribosyl)imidazole from N(2)-formyl-N(1)-(5-phospho-D-ribosyl)glycinamide: step 2/2. This is Phosphoribosylformylglycinamidine cyclo-ligase from Staphylococcus carnosus (strain TM300).